The primary structure comprises 374 residues: Alanine racemase (374 aa).

Catalysis depends on Lys-34, which acts as the Proton acceptor; specific for D-alanine. Residue Lys-34 is modified to N6-(pyridoxal phosphate)lysine. Arg-147 provides a ligand contact to substrate. Tyr-271 functions as the Proton acceptor; specific for L-alanine in the catalytic mechanism. Met-319 contacts substrate.

Belongs to the alanine racemase family. The cofactor is pyridoxal 5'-phosphate.

It carries out the reaction L-alanine = D-alanine. It participates in amino-acid biosynthesis; D-alanine biosynthesis; D-alanine from L-alanine: step 1/1. Its function is as follows. Catalyzes the interconversion of L-alanine and D-alanine. May also act on other amino acids. This chain is Alanine racemase (alr), found in Actinobacillus pleuropneumoniae serotype 5b (strain L20).